The chain runs to 476 residues: RuvB-like helicase 2 (476 aa).

An ATP-binding site is contributed by 72–80 (VGPPSTGKT).

Belongs to the RuvB family. As to quaternary structure, may form heterododecamers with RVB1. Component of the SWR1 chromatin remodeling complex, the INO80 chromatin remodeling complex, and of the R2TP complex.

It localises to the nucleus. It catalyses the reaction ATP + H2O = ADP + phosphate + H(+). In terms of biological role, DNA helicase which participates in several chromatin remodeling complexes, including the SWR1 and the INO80 complexes. The SWR1 complex mediates the ATP-dependent exchange of histone H2A for the H2A variant HZT1 leading to transcriptional regulation of selected genes by chromatin remodeling. The INO80 complex remodels chromatin by shifting nucleosomes and is involved in DNA repair. Also involved in pre-rRNA processing. The protein is RuvB-like helicase 2 (RVB2) of Mycosarcoma maydis (Corn smut fungus).